A 393-amino-acid polypeptide reads, in one-letter code: MNHSPNQSRPVSIMRRFLDSESAGGVSLMVAAALALIVANSPFSQAYFDILHTHIGPLSLTDWINDALMAVFFLLVGLEIKREFLDGQLASWPNRMLPGIAAAGGVILPAIIFTAFNWHDPAKVRGWAVPSATDIAFALGVLSLLGSRVPSSLKVFLATLAILDDLAAVVIIAIFYTAEISMPYLGGAFAAAIVLFVMNRMGVMKLLPYLIGGAALWFFVLNSGVHATVAGVVTALMIPLKAAPGRPDDMTSPLHVLEHALAKPVAFIIVPIFGFANAGISFAGLDASVMRDTLTLGIMLGLFIGKQLGVFGAAWLAIKTGLAQKPLGATWIQLYGVAVLCGIGFTMSIFIGLLSFPSDLMQAETKIGVLAGSGLSAICGYILLRLVTKPKNT.

11 consecutive transmembrane segments (helical) span residues 23–43 (AGGV…NSPF), 58–78 (LSLT…LVGL), 96–116 (MLPG…FTAF), 126–146 (GWAV…SLLG), 155–175 (VFLA…IAIF), 178–198 (AEIS…LFVM), 224–244 (GVHA…KAAP), 265–285 (VAFI…FAGL), 298–318 (IMLG…WLAI), 334–354 (LYGV…IGLL), and 367–387 (IGVL…LRLV).

The protein belongs to the NhaA Na(+)/H(+) (TC 2.A.33) antiporter family.

The protein resides in the cell inner membrane. The catalysed reaction is Na(+)(in) + 2 H(+)(out) = Na(+)(out) + 2 H(+)(in). Functionally, na(+)/H(+) antiporter that extrudes sodium in exchange for external protons. The chain is Na(+)/H(+) antiporter NhaA 1 from Brucella anthropi (strain ATCC 49188 / DSM 6882 / CCUG 24695 / JCM 21032 / LMG 3331 / NBRC 15819 / NCTC 12168 / Alc 37) (Ochrobactrum anthropi).